The chain runs to 335 residues: Dihydroorotate dehydrogenase (quinone) (335 aa).

Residues 59–63 and T83 each bind FMN; that span reads AGLDK. Residue K63 participates in substrate binding. 108–112 lines the substrate pocket; that stretch reads NRMGF. Residues N136 and N169 each coordinate FMN. N169 provides a ligand contact to substrate. Residue S172 is the Nucleophile of the active site. Residue N174 coordinates substrate. 2 residues coordinate FMN: K214 and T242. Position 243–244 (243–244) interacts with substrate; that stretch reads NT. Residues G265, G294, and 315-316 contribute to the FMN site; that span reads YS.

This sequence belongs to the dihydroorotate dehydrogenase family. Type 2 subfamily. Monomer. FMN serves as cofactor.

It is found in the cell membrane. It carries out the reaction (S)-dihydroorotate + a quinone = orotate + a quinol. Its pathway is pyrimidine metabolism; UMP biosynthesis via de novo pathway; orotate from (S)-dihydroorotate (quinone route): step 1/1. In terms of biological role, catalyzes the conversion of dihydroorotate to orotate with quinone as electron acceptor. This is Dihydroorotate dehydrogenase (quinone) from Neisseria gonorrhoeae (strain ATCC 700825 / FA 1090).